We begin with the raw amino-acid sequence, 254 residues long: MERKRYIFGNWKMHKTAKEAKDYLSVFCPLLEEVAPVSCVGITPAFTALHACCESIKFFHSPLWLGAQNVHQDTSGAFTGEISLPMLKEFDVNFVLLGHSECRHIFHEEDTTIALKVGAAAREGIIPVLCIGETLEVREKGATEAMLSNQLMLGLAQLPETASVIIAYEPVWAIGTGKVASAVDVQEAHAFCREVLANIFSKEKAEEISILYGGSVKADNAEGFARCPDVDGLLVGGASLDPKVFADVVANFHR.

10-12 (NWK) is a substrate binding site. Catalysis depends on histidine 99, which acts as the Electrophile. Glutamate 169 serves as the catalytic Proton acceptor. Substrate contacts are provided by residues glycine 175, serine 215, and 236–237 (GG).

Belongs to the triosephosphate isomerase family. Homodimer.

It localises to the cytoplasm. The catalysed reaction is D-glyceraldehyde 3-phosphate = dihydroxyacetone phosphate. It functions in the pathway carbohydrate biosynthesis; gluconeogenesis. It participates in carbohydrate degradation; glycolysis; D-glyceraldehyde 3-phosphate from glycerone phosphate: step 1/1. Involved in the gluconeogenesis. Catalyzes stereospecifically the conversion of dihydroxyacetone phosphate (DHAP) to D-glyceraldehyde-3-phosphate (G3P). This Chlamydia abortus (strain DSM 27085 / S26/3) (Chlamydophila abortus) protein is Triosephosphate isomerase.